Consider the following 307-residue polypeptide: L-carnitine dehydrogenase (307 aa).

An NAD(+)-binding site is contributed by 8–13 (GTGVIG).

This sequence belongs to the 3-hydroxyacyl-CoA dehydrogenase family. L-carnitine dehydrogenase subfamily. As to quaternary structure, homodimer.

It is found in the cytoplasm. The catalysed reaction is carnitine + NAD(+) = 3-dehydrocarnitine + NADH + H(+). It participates in amine and polyamine metabolism; carnitine metabolism. Its function is as follows. Catalyzes the NAD(+)-dependent oxidation of L-carnitine to 3-dehydrocarnitine. In Oceanobacillus iheyensis (strain DSM 14371 / CIP 107618 / JCM 11309 / KCTC 3954 / HTE831), this protein is L-carnitine dehydrogenase.